Reading from the N-terminus, the 414-residue chain is Serine hydroxymethyltransferase (414 aa).

(6S)-5,6,7,8-tetrahydrofolate contacts are provided by residues Leu116 and 120 to 122; that span reads GHL. An N6-(pyridoxal phosphate)lysine modification is found at Lys224. Residues Glu240 and 348–350 contribute to the (6S)-5,6,7,8-tetrahydrofolate site; that span reads SPF.

This sequence belongs to the SHMT family. In terms of assembly, homodimer. Pyridoxal 5'-phosphate is required as a cofactor.

The protein localises to the cytoplasm. The catalysed reaction is (6R)-5,10-methylene-5,6,7,8-tetrahydrofolate + glycine + H2O = (6S)-5,6,7,8-tetrahydrofolate + L-serine. It functions in the pathway one-carbon metabolism; tetrahydrofolate interconversion. The protein operates within amino-acid biosynthesis; glycine biosynthesis; glycine from L-serine: step 1/1. Catalyzes the reversible interconversion of serine and glycine with tetrahydrofolate (THF) serving as the one-carbon carrier. This reaction serves as the major source of one-carbon groups required for the biosynthesis of purines, thymidylate, methionine, and other important biomolecules. Also exhibits THF-independent aldolase activity toward beta-hydroxyamino acids, producing glycine and aldehydes, via a retro-aldol mechanism. In Campylobacter jejuni subsp. jejuni serotype O:23/36 (strain 81-176), this protein is Serine hydroxymethyltransferase.